The primary structure comprises 363 residues: Cleavage and termination factor 1 (363 aa).

The RRM domain maps to 7–85 (NVVFVGNIPY…RKIRVEFPSN (79 aa)). The tract at residues 291 to 325 (QPASATSSPPSVPQKIPSSNHKSQQANGSDQGNEG) is disordered. Residues 306–322 (IPSSNHKSQQANGSDQG) show a composition bias toward polar residues.

In terms of assembly, interacts with res2.

It is found in the nucleus. Functionally, component of the cleavage factor I (CF I) involved in pre-mRNA 3'-end processing. The protein is Cleavage and termination factor 1 (ctf1) of Schizosaccharomyces pombe (strain 972 / ATCC 24843) (Fission yeast).